A 522-amino-acid chain; its full sequence is Zinc finger protein STOP1 homolog (522 aa).

2 stretches are compositionally biased toward polar residues: residues 1 to 12 (MDSGLGRSSETS) and 19 to 40 (MASNATRNTDPDQQGVRFSSMD). 2 disordered regions span residues 1–43 (MDSG…DQPP) and 234–260 (CGGEGSEPIPMEDHDVKESDDGGEREN). Residues 244–260 (MEDHDVKESDDGGEREN) are compositionally biased toward basic and acidic residues. A C2H2-type 1 zinc finger spans residues 282–304 (HFCLICGKGFKRDANLRMHMRGH). The C2H2-type 2; atypical zinc-finger motif lies at 390–421 (KHCGRDKWLCSCGTTFSRKDKLFGHVALFQGH).

The protein localises to the nucleus. Functionally, probable transcription factor that may be involved in aluminum tolerance. In Oryza sativa subsp. japonica (Rice), this protein is Zinc finger protein STOP1 homolog.